Here is an 822-residue protein sequence, read N- to C-terminus: Calpain-3 (822 aa).

The interval 1 to 36 is disordered; sequence MPTVISASVAPRTGAEPRSPGPIAQAAQGKGTEAGG. The Calpain catalytic domain occupies 74-418; sequence LFVDPEFPPD…FTKLEICNLT (345 aa). Residues Cys129, His335, and Asn359 contribute to the active site. The domain III stretch occupies residues 419–587; sequence ADALESDKLQ…KRNLSEEVEN (169 aa). The segment at 588–649 is linker; the sequence is TISVDRPVKK…LKPGNIDQES (62 aa). Residues 600–651 form a disordered region; that stretch reads PKPIIFGSDRANSNKELGVDQESEEGKDNTSPDKQAKSPQLKPGNIDQESKE. A compositionally biased stretch (basic and acidic residues) spans 623 to 635; that stretch reads EEGKDNTSPDKQA. EF-hand domains lie at 650 to 684, 693 to 726, 723 to 758, and 788 to 822; these read KEQR…VVNK, FTLE…KKIK, KKIK…AGFH, and VRLE…TMYA. The interval 650-822 is domain IV; that stretch reads KEQRQFRNIF…LEWLQLTMYA (173 aa). Ala663, Asp666, Glu668, Glu673, Asp706, Asp708, Ser710, Arg712, Glu717, Asp736, Asp738, Ser740, Thr742, Glu747, Asp801, Asp803, Asp805, and Ile807 together coordinate Ca(2+).

The protein belongs to the peptidase C2 family. As to quaternary structure, homodimer; via EF-hand domain 4. Interacts with TTN/titin. Interacts with CMYA5; this interaction, which results in CMYA5 proteolysis, may protect CAPN3 from autolysis. Interacts with SIMC1. Interacts with UTP25; the interaction is required for CAPN3 translocation to the nucleolus. As to expression, skeletal muscle.

It localises to the cytoplasm. It is found in the nucleus. The protein resides in the nucleolus. The enzyme catalyses Broad endopeptidase activity.. With respect to regulation, activated by micromolar concentrations of calcium and inhibited by calpastatin. Calcium-regulated non-lysosomal thiol-protease. Proteolytically cleaves CTBP1. Mediates, with UTP25, the proteasome-independent degradation of p53/TP53. The chain is Calpain-3 (CAPN3) from Ovis aries (Sheep).